Here is a 535-residue protein sequence, read N- to C-terminus: Dynein axonemal assembly factor 8 (535 aa).

Disordered regions lie at residues 112-215 (AELA…QERR), 228-267 (RDAC…EGPP), 344-380 (PADT…QGMR), 395-444 (TVPP…LRSC), and 461-535 (IAQP…LDQL). Over residues 125-139 (RTKDASSQEGRDPGR) the composition is skewed to basic and acidic residues. Positions 166–175 (GSLSFNTKGS) are enriched in polar residues. A Phosphoserine modification is found at S175. The residue at position 362 (S362) is a Phosphoserine. A compositionally biased stretch (acidic residues) spans 415 to 424 (DSEEEEEEVE). Residues 435–444 (SPSSLGLRSC) show a composition bias toward polar residues.

The protein localises to the dynein axonemal particle. It is found in the cytoplasm. Its function is as follows. In cyliated cells, dynein axonemal particle-specific protein required for deployment of ODA to the axoneme. Interacts with outer dynein arm (ODA) subunits. This is Dynein axonemal assembly factor 8 (DNAAF8) from Macaca fascicularis (Crab-eating macaque).